The chain runs to 237 residues: Uridylate kinase (237 aa).

An ATP-binding site is contributed by 9–12; the sequence is KLSG. Gly51 contributes to the UMP binding site. Positions 52 and 56 each coordinate ATP. Residues Asp71 and 132–139 contribute to the UMP site; that span reads CGNPFFTT. Positions 159, 165, and 168 each coordinate ATP.

Belongs to the UMP kinase family. As to quaternary structure, homohexamer.

It is found in the cytoplasm. The catalysed reaction is UMP + ATP = UDP + ADP. It participates in pyrimidine metabolism; CTP biosynthesis via de novo pathway; UDP from UMP (UMPK route): step 1/1. With respect to regulation, inhibited by UTP. Functionally, catalyzes the reversible phosphorylation of UMP to UDP. This Prochlorococcus marinus (strain NATL1A) protein is Uridylate kinase.